A 387-amino-acid polypeptide reads, in one-letter code: Phosphoglycerate kinase (387 aa).

Residues 21–23, R36, 59–62, R113, and R146 contribute to the substrate site; these read DLN and HLGR. Residues K197, E314, and 340–343 contribute to the ATP site; that span reads GGDT.

This sequence belongs to the phosphoglycerate kinase family. Monomer.

It is found in the cytoplasm. The catalysed reaction is (2R)-3-phosphoglycerate + ATP = (2R)-3-phospho-glyceroyl phosphate + ADP. It participates in carbohydrate degradation; glycolysis; pyruvate from D-glyceraldehyde 3-phosphate: step 2/5. In Aeromonas hydrophila subsp. hydrophila (strain ATCC 7966 / DSM 30187 / BCRC 13018 / CCUG 14551 / JCM 1027 / KCTC 2358 / NCIMB 9240 / NCTC 8049), this protein is Phosphoglycerate kinase.